The chain runs to 297 residues: ER membrane protein complex subunit 2 (297 aa).

An N-acetylalanine modification is found at Ala2. 3 TPR repeats span residues 87-120 (HRVK…DPTN), 155-188 (QEAW…NPYN), and 192-225 (CQQY…NNRN). The residue at position 255 (Lys255) is an N6-acetyllysine.

Belongs to the EMC2 family. Component of the ER membrane protein complex (EMC).

Its subcellular location is the endoplasmic reticulum membrane. In terms of biological role, part of the endoplasmic reticulum membrane protein complex (EMC) that enables the energy-independent insertion into endoplasmic reticulum membranes of newly synthesized membrane proteins. Preferentially accommodates proteins with transmembrane domains that are weakly hydrophobic or contain destabilizing features such as charged and aromatic residues. Involved in the cotranslational insertion of multi-pass membrane proteins in which stop-transfer membrane-anchor sequences become ER membrane spanning helices. It is also required for the post-translational insertion of tail-anchored/TA proteins in endoplasmic reticulum membranes. By mediating the proper cotranslational insertion of N-terminal transmembrane domains in an N-exo topology, with translocated N-terminus in the lumen of the ER, controls the topology of multi-pass membrane proteins like the G protein-coupled receptors. By regulating the insertion of various proteins in membranes, it is indirectly involved in many cellular processes. The protein is ER membrane protein complex subunit 2 of Bos taurus (Bovine).